A 304-amino-acid polypeptide reads, in one-letter code: GTPase Era (304 aa).

Residues 11 to 179 (YCGFIAIVGR…QKIVRKSLRE (169 aa)) enclose the Era-type G domain. The G1 stretch occupies residues 19–26 (GRPNVGKS). Position 19 to 26 (19 to 26 (GRPNVGKS)) interacts with GTP. Positions 45 to 49 (QTTRH) are G2. Positions 66 to 69 (DTPG) are G3. GTP contacts are provided by residues 66–70 (DTPGL) and 128–131 (NKVD). The interval 128–131 (NKVD) is G4. A G5 region spans residues 158-160 (ISA). Residues 210-287 (TGEELPYSVT…HLELWVKVKA (78 aa)) enclose the KH type-2 domain.

Belongs to the TRAFAC class TrmE-Era-EngA-EngB-Septin-like GTPase superfamily. Era GTPase family. Monomer.

Its subcellular location is the cytoplasm. It localises to the cell inner membrane. An essential GTPase that binds both GDP and GTP, with rapid nucleotide exchange. Plays a role in 16S rRNA processing and 30S ribosomal subunit biogenesis and possibly also in cell cycle regulation and energy metabolism. This is GTPase Era from Actinobacillus pleuropneumoniae serotype 3 (strain JL03).